The sequence spans 151 residues: Minor capsid protein P12 (151 aa).

2 hydrophobic regions span residues 23–43 and 46–66; these read FIFF…YTIY and VQNT…IWNF. Cysteine 112 and cysteine 120 are joined by a disulfide.

Interacts with the major capsid protein.

It is found in the virion. Functionally, one of the minor capsid proteins that constitute a network internal to the major capsid proteins and outside the lipid membrane. The minor capsid protein P12 does not serve a cross-linking function between neighboring capsomers, it may play a role in the viral capsid assembly. The chain is Minor capsid protein P12 from Paramecium bursaria Chlorella virus 1 (PBCV-1).